The sequence spans 92 residues: UPF0223 protein SMU_1141c (92 aa).

The protein belongs to the UPF0223 family.

The chain is UPF0223 protein SMU_1141c from Streptococcus mutans serotype c (strain ATCC 700610 / UA159).